Here is a 408-residue protein sequence, read N- to C-terminus: Imidazolonepropionase (408 aa).

Fe(3+)-binding residues include His-73 and His-75. Zn(2+) contacts are provided by His-73 and His-75. 4-imidazolone-5-propanoate is bound by residues Arg-82, Tyr-145, and His-178. An N-formimidoyl-L-glutamate-binding site is contributed by Tyr-145. His-243 serves as a coordination point for Fe(3+). His-243 is a binding site for Zn(2+). Position 246 (Gln-246) interacts with 4-imidazolone-5-propanoate. A Fe(3+)-binding site is contributed by Asp-318. Residue Asp-318 coordinates Zn(2+). N-formimidoyl-L-glutamate contacts are provided by Asn-320 and Gly-322. 4-imidazolone-5-propanoate is bound at residue Ser-323.

The protein belongs to the metallo-dependent hydrolases superfamily. HutI family. Zn(2+) serves as cofactor. It depends on Fe(3+) as a cofactor.

The protein resides in the cytoplasm. It catalyses the reaction 4-imidazolone-5-propanoate + H2O = N-formimidoyl-L-glutamate. The protein operates within amino-acid degradation; L-histidine degradation into L-glutamate; N-formimidoyl-L-glutamate from L-histidine: step 3/3. Its function is as follows. Catalyzes the hydrolytic cleavage of the carbon-nitrogen bond in imidazolone-5-propanoate to yield N-formimidoyl-L-glutamate. It is the third step in the universal histidine degradation pathway. This Shewanella oneidensis (strain ATCC 700550 / JCM 31522 / CIP 106686 / LMG 19005 / NCIMB 14063 / MR-1) protein is Imidazolonepropionase.